We begin with the raw amino-acid sequence, 504 residues long: MHTHELFKTPLEEDEVEVSEDDVVGFIAEIEQEVVNESDSEIGEYDLGDDIGAPEPFERAAANAEDSISSDGSFNPNDEDSDTDSDDSMLDEPDEAAVGGASKAKRRKDDDGPSGSSNRNQDSDGNAFDMDEDDETDETVRAIIAAIKKPRSAPPEIKLEDFITDICFHPERHIIALATIIGDVHLYEYSNEENKLLKTIEVHAKACRDVEFTEDGRSLITCSKDKSVMITDMETEKLKKLYETAHDDAINKLLVLDERLFASGDDSGTVKLWDFRTKDSIFELKEIEDQVTQMITNDQKKLLLATSADGYLTTFNIGARKLYVQSEPYEEELNCMGIYRGNSKLVVGTSKGRLYSYNWGYFGYHCDMYPGIKSPISLMIPITERIACVAGEDGNIRACHITPYRNLGVVGQHNMPIESMDINTNGELLASSSHNNDVRFWNVKYFEDFGDIKYNEKHNAYKDKRHNLPSSKCTNASDFFADLAKEDNNDNENDDATAGPSNTT.

Over residues 32–49 (QEVVNESDSEIGEYDLGD) the composition is skewed to acidic residues. Positions 32 to 135 (QEVVNESDSE…NAFDMDEDDE (104 aa)) are disordered. Residues 66-76 (DSISSDGSFNP) are compositionally biased toward polar residues. The segment covering 77-95 (NDEDSDTDSDDSMLDEPDE) has biased composition (acidic residues). Residues 114–124 (SGSSNRNQDSD) show a composition bias toward polar residues. WD repeat units follow at residues 158-197 (KLED…NKLL), 202-241 (VHAK…LKKL), 245-283 (AHDD…SIFE), 286-325 (EIED…LYVQ), 328-367 (PYEE…YHCD), and 412-451 (QHNM…DFGD). Positions 484 to 504 (AKEDNNDNENDDATAGPSNTT) are disordered.

It belongs to the WD repeat WDR55 family.

The chain is WD repeat-containing protein 55 homolog from Drosophila willistoni (Fruit fly).